The primary structure comprises 116 residues: Flagellar transcriptional regulator FlhD (116 aa).

This sequence belongs to the FlhD family. As to quaternary structure, homodimer; disulfide-linked. Forms a heterohexamer composed of two FlhC and four FlhD subunits. Each FlhC binds a FlhD dimer, forming a heterotrimer, and a hexamer assembles by dimerization of two heterotrimers.

It localises to the cytoplasm. Functions in complex with FlhC as a master transcriptional regulator that regulates transcription of several flagellar and non-flagellar operons by binding to their promoter region. Activates expression of class 2 flagellar genes, including fliA, which is a flagellum-specific sigma factor that turns on the class 3 genes. Also regulates genes whose products function in a variety of physiological pathways. This Xenorhabdus nematophila (Achromobacter nematophilus) protein is Flagellar transcriptional regulator FlhD.